Here is a 547-residue protein sequence, read N- to C-terminus: Elongator complex protein 3 (547 aa).

One can recognise a Radical SAM core domain in the interval 82–372; it reads RTASGIAVVA…YRVQRDIPMP (291 aa). [4Fe-4S] cluster contacts are provided by C99, C109, and C112. S161 is modified (phosphoserine). K164 lines the acetyl-CoA pocket. Residue Y202 is modified to Phosphotyrosine; by ALK. K229 carries the post-translational modification N6-methyllysine. Phosphotyrosine is present on Y251. The 152-residue stretch at 396 to 547 folds into the N-acetyltransferase domain; it reads IQCRDVRTRE…QGPYMVKMLK (152 aa). Acetyl-CoA-binding positions include 474–477, 497–499, and Y530; these read ELHV and FGM.

It belongs to the ELP3 family. In terms of assembly, component of the elongator complex which consists of ELP1, ELP2, ELP3, ELP4, ELP5 and ELP6. ELP1, ELP2 and ELP3 form the elongator core complex. Interacts with alpha-tubulin. [4Fe-4S] cluster is required as a cofactor. Tyrosine-phosphorylated; phosphorylation on Tyr-202 does not affect elongator complex integrity or ELP3 protein stability. Also serine/threonine-phosphorylated. As to expression, expressed in the cerebellum and spinal motor neurons.

The protein localises to the cytoplasm. Its subcellular location is the nucleus. It catalyses the reaction uridine(34) in tRNA + acetyl-CoA + S-adenosyl-L-methionine + H2O = 5-(carboxymethyl)uridine(34) in tRNA + 5'-deoxyadenosine + L-methionine + CoA + 2 H(+). The protein operates within tRNA modification; 5-methoxycarbonylmethyl-2-thiouridine-tRNA biosynthesis. Catalytic tRNA acetyltransferase subunit of the elongator complex which is required for multiple tRNA modifications, including mcm5U (5-methoxycarbonylmethyl uridine), mcm5s2U (5-methoxycarbonylmethyl-2-thiouridine), and ncm5U (5-carbamoylmethyl uridine). In the elongator complex, acts as a tRNA uridine(34) acetyltransferase by mediating formation of carboxymethyluridine in the wobble base at position 34 in tRNAs. May also act as a protein lysine acetyltransferase by mediating acetylation of target proteins; such activity is however unclear in vivo and recent evidences suggest that ELP3 primarily acts as a tRNA acetyltransferase. Involved in neurogenesis: regulates the migration and branching of projection neurons in the developing cerebral cortex, through a process depending on alpha-tubulin acetylation. Required for acetylation of GJA1 in the developing cerebral cortex. The protein is Elongator complex protein 3 of Homo sapiens (Human).